Here is a 175-residue protein sequence, read N- to C-terminus: Peptide deformylase (175 aa).

Fe cation is bound by residues Cys96 and His138. Glu139 is a catalytic residue. Residue His142 coordinates Fe cation.

This sequence belongs to the polypeptide deformylase family. The cofactor is Fe(2+).

The catalysed reaction is N-terminal N-formyl-L-methionyl-[peptide] + H2O = N-terminal L-methionyl-[peptide] + formate. Removes the formyl group from the N-terminal Met of newly synthesized proteins. Requires at least a dipeptide for an efficient rate of reaction. N-terminal L-methionine is a prerequisite for activity but the enzyme has broad specificity at other positions. In Rhodopseudomonas palustris (strain BisB18), this protein is Peptide deformylase.